The following is an 876-amino-acid chain: MGDSDDEYDRRRRDKFRRERSDYDRSRERDERRRGDDWNDREWDRGRERRSRGEYRDYDRNRRERFSPPRHELSPPQKRMRRDWDEHSSDPYHSGYEMPYAGGGGGPAYGPPQPWGHPDVHIVQHPVLPIQARLGSIAEIDLGVPPPVMKTFKEFLLSLDDAVDETEAVKRYNDYKLDFRRQQMQDFFLAHKDEEWFRSKYHPDEVGKRRQEARGALQNRLRVFLSLMESGWFDNLLLDIDKADAIVKMLDAAVIKMEGGTENDLRILEQEEEEEQAGKPGEPNKKEESRVGPGLGDGERKANEKDDKKEDGKQAENESSSDDKIKKSEGDGDKEEKKEDSEKEAKKSSKKRNRKHSGDDSFDEGSVSESESESESGQAEEEKEEADETLKEKEKPKEEEREKPKDAPGLECKPRPLHKTCSLFMRNIAPNISRAEIISLCKRYPGFMRVALSEPQPERRFFRRGWVTFDRSVNIKEICWNLQNIRLRECELSPGVNRDLTRRVRNINGITQHKQIVRNDIKLAAKLVHTLDDRTQLWAPEPGTPALPASLPSQNPILKNITDYLIEEVSAEEEELLGSSGGAPPEEPPKEGNPAEINVERDEKLIKVLDKLLLYLRIVHSLDYYNTCEYPNEDEMPNRCGIIHVRGPMPPNRISHGEVLEWQKTFEEKLTPLLSVRESLSEEEAQKMGRKDPEQEVEKFVTSNTQELGKDKWLCPLSGKKFKGPEFVRKHIFNKHAEKIEEVKKEVAFFNNFLTDAKRPALPEIKPAQPPGPAQILPPGLTPGLPYPHQTPQGLMPYGQPRPPILGYGAGAVRPAVPTGGPPYPHAPYGAGRGNYDAFRGQGGYPGKPRNRMVRGDPRAIVEYRDLDAPDDVDFF.

Positions 1-90 (MGDSDDEYDR…RRDWDEHSSD (90 aa)) are disordered. An N-acetylglycine modification is found at Gly-2. Ser-4 carries the post-translational modification Phosphoserine. Residue Tyr-8 is modified to Phosphotyrosine. The segment covering 8 to 73 (YDRRRRDKFR…ERFSPPRHEL (66 aa)) has biased composition (basic and acidic residues). Residues Ser-67, Ser-74, and Ser-136 each carry the phosphoserine modification. Residue Lys-150 forms a Glycyl lysine isopeptide (Lys-Gly) (interchain with G-Cter in SUMO2) linkage. A disordered region spans residues 272 to 413 (EEEEQAGKPG…PKDAPGLECK (142 aa)). Residues 297–347 (DGERKANEKDDKKEDGKQAENESSSDDKIKKSEGDGDKEEKKEDSEKEAKK) are compositionally biased toward basic and acidic residues. The span at 370–387 (SESESESGQAEEEKEEAD) shows a compositional bias: acidic residues. Positions 388–413 (ETLKEKEKPKEEEREKPKDAPGLECK) are enriched in basic and acidic residues. Ser-493 carries the post-translational modification Phosphoserine. Thr-544 carries the phosphothreonine modification. Residue Ser-570 is modified to Phosphoserine. The segment at 575-597 (ELLGSSGGAPPEEPPKEGNPAEI) is disordered. Thr-671 bears the Phosphothreonine mark. Residue Ser-679 is modified to Phosphoserine. Omega-N-methylarginine occurs at positions 833, 840, and 850. Residues 835 to 854 (NYDAFRGQGGYPGKPRNRMV) form a disordered region.

Belongs to the ARS2 family. In terms of assembly, interacts with CASP8AP2, ERBB4, NCBP1/CBP80 and DROSHA. Interacts with LUZP4. Interacts with NCBP2/CBP20 and NCBP3. Interacts with MTREX.

It is found in the nucleus. The protein localises to the nucleoplasm. Its subcellular location is the cytoplasm. In terms of biological role, acts as a mediator between the cap-binding complex (CBC) and the primary microRNAs (miRNAs) processing machinery during cell proliferation. Contributes to the stability and delivery of capped primary miRNA transcripts to the primary miRNA processing complex containing DGCR8 and DROSHA, thereby playing a role in RNA-mediated gene silencing (RNAi) by miRNAs. Binds capped RNAs (m7GpppG-capped RNA); however interaction is probably mediated via its interaction with NCBP1/CBP80 component of the CBC complex. Involved in cell cycle progression at S phase. Does not directly confer arsenite resistance but rather modulates arsenic sensitivity. Independently of its activity on miRNAs, necessary and sufficient to promote neural stem cell self-renewal. Does so by directly binding SOX2 promoter and positively regulating its transcription. This chain is Serrate RNA effector molecule homolog (SRRT), found in Bos taurus (Bovine).